A 170-amino-acid polypeptide reads, in one-letter code: Flavin reductase (170 aa).

Residues Ser-51, His-138, and 159-162 (FYRG) each bind NAD(+).

The protein belongs to the non-flavoprotein flavin reductase family. Homodimer. Likely forms a loose transient complex with monooxygenases for which it provides FMNH(2).

It catalyses the reaction FMNH2 + NAD(+) = FMN + NADH + 2 H(+). It carries out the reaction FADH2 + NAD(+) = FAD + NADH + 2 H(+). Its function is as follows. Catalyzes the reduction of FMN, and to a lesser extent, FAD, using NADH as an electron donor. Is able to provide the FMNH(2) required for the Baeyer-Villiger oxidations catalyzed by 2,5-diketocamphane monooxygenases and 3,6-diketocamphane monooxygenase. NADPH acts as a very poor cosubstrate. The chain is Flavin reductase from Pseudomonas putida (Arthrobacter siderocapsulatus).